Consider the following 286-residue polypeptide: MSDLSPDKPRLDLSFVRRGSRTVIDRRLFAWPFVLTRSFHTDAARPDCLSVILQTGSGAVHGEDRLTQRLTLHAGAAVCVTTQGATSVHRAEPGARAVEHVLLHVEAGASLDYRPEPRILFPDAALCQVLDLECAADAAALVTDAFTMHDPDGQGRLFRELDSKLIVRRQGKEPLLIDRMHLRDPATALFNGRRAFGSAVLMLPPTHDRAAIRLRLADAFARIDDLYAAASLLQDGAGIGVRFAAREVRQLRAGFDAVAAVVREIDLGARAAQAPRAAATARPTAA.

Belongs to the UreD family. As to quaternary structure, ureD, UreF and UreG form a complex that acts as a GTP-hydrolysis-dependent molecular chaperone, activating the urease apoprotein by helping to assemble the nickel containing metallocenter of UreC. The UreE protein probably delivers the nickel.

The protein resides in the cytoplasm. Required for maturation of urease via the functional incorporation of the urease nickel metallocenter. The chain is Urease accessory protein UreD 2 from Bradyrhizobium sp. (strain ORS 278).